A 519-amino-acid chain; its full sequence is Membrane-bound glycerophospholipid O-acyltransferase 2 (519 aa).

6 consecutive transmembrane segments (helical) span residues 22–42, 61–81, 88–108, 184–204, 236–256, and 288–305; these read PIDQ…AVWF, TLLG…HFLV, CIMI…FALG, FMGI…FIEG, LLVC…LPVE, and YFAW…GFGF. Active-site residues include Asn-341 and His-372. 3 helical membrane passes run 365–385, 415–435, and 443–463; these read FFLS…FLTG, IITW…FVLL, and FYRS…LLLP.

The protein belongs to the membrane-bound acyltransferase family.

The protein localises to the endoplasmic reticulum membrane. It catalyses the reaction a 1-acyl-sn-glycero-3-phosphocholine + an acyl-CoA = a 1,2-diacyl-sn-glycero-3-phosphocholine + CoA. The catalysed reaction is a 1-acyl-sn-glycero-3-phosphoethanolamine + an acyl-CoA = a 1,2-diacyl-sn-glycero-3-phosphoethanolamine + CoA. It carries out the reaction a 1-acyl-sn-glycero-3-phosphate + an acyl-CoA = a 1,2-diacyl-sn-glycero-3-phosphate + CoA. The enzyme catalyses (9Z)-hexadecenoyl-CoA + 1-hexadecanoyl-sn-glycero-3-phosphocholine = 1-hexadecanoyl-2-(9Z-hexadecenoyl)-sn-glycero-3-phosphocholine + CoA. It catalyses the reaction 1-hexadecanoyl-sn-glycero-3-phosphoethanolamine + (9Z)-octadecenoyl-CoA = 1-hexadecanoyl-2-(9Z-octadecenoyl)-sn-glycero-3-phosphoethanolamine + CoA. The catalysed reaction is 1-hexadecanoyl-sn-glycero-3-phosphoethanolamine + (9Z)-hexadecenoyl-CoA = 1-hexadecanoyl-2-(9Z)-hexadecenoyl-sn-glycero-3-phosphoethanolamine + CoA. It carries out the reaction 1-(9Z-octadecenoyl)-sn-glycero-3-phospho-L-serine + hexadecanoyl-CoA = 1-(9Z)-octadecenoyl-2-hexadecanoyl-sn-glycero-3-phosphoserine + CoA. The enzyme catalyses (9Z,12Z)-octadecadienoyl-CoA + 1-hexadecanoyl-sn-glycero-3-phosphocholine = 1-hexadecanoyl-2-(9Z,12Z-octadecadienoyl)-sn-glycero-3-phosphocholine + CoA. It catalyses the reaction 1-hexadecanoyl-sn-glycero-3-phosphocholine + (9Z)-octadecenoyl-CoA = 1-hexadecanoyl-2-(9Z-octadecenoyl)-sn-glycero-3-phosphocholine + CoA. The catalysed reaction is 1-hexadecanoyl-sn-glycero-3-phosphate + (9Z)-hexadecenoyl-CoA = 1-hexadecanoyl-2-[(9Z)-hexadec-9-enoyl]-sn-glycero-3-phosphate + CoA. It carries out the reaction 1-hexadecanoyl-sn-glycero-3-phosphate + (9Z)-octadecenoyl-CoA = 1-hexadecanoyl-2-(9Z-octadecenoyl)-sn-glycero-3-phosphate + CoA. The enzyme catalyses a 1-O-(1Z-alkenyl)-sn-glycero-3-phosphocholine + (9Z)-octadecenoyl-CoA = 1-O-(1Z)-alkenyl-2-(9Z)-octadecenoyl-sn-glycero-3-phosphocholine + CoA. It catalyses the reaction a 1-O-(1Z-alkenyl)-sn-glycero-3-phosphoethanolamine + (9Z)-octadecenoyl-CoA = 1-O-(1Z)-alkenyl-2-(9Z)-octadecenoyl-sn-glycero-3-phosphoethanolamine + CoA. The catalysed reaction is 1-octadecanoyl-sn-glycero-3-phosphoethanolamine + (9Z)-octadecenoyl-CoA = 1-octadecanoyl-2-(9Z-octadecenoyl)-sn-glycero-3-phosphoethanolamine + CoA. It carries out the reaction 1-octadecanoyl-sn-glycero-3-phosphocholine + (9Z)-octadecenoyl-CoA = 1-octadecanoyl-2-(9Z-octadecenoyl)-sn-glycero-3-phosphocholine + CoA. The enzyme catalyses 1-(9Z-octadecenoyl)-sn-glycero-3-phosphoethanolamine + (9Z)-octadecenoyl-CoA = 1,2-di-(9Z-octadecenoyl)-sn-glycero-3-phosphoethanolamine + CoA. The protein operates within lipid metabolism; phospholipid metabolism. Partially inhibited by thimerosal. In terms of biological role, acyltransferase which catalyzes the transfer of an acyl group from an acyl-CoA to a lysophospholipid leading to the production of a phospholipid and participates in the reacylation step of the phospholipid remodeling pathway also known as the Lands cycle. May catalyze preferentially the acylation of lysophosphatidylethanolamine (1-acyl-sn-glycero-3-phosphoethanolamine or LPE) and lysophosphatidic acid (LPA) and to a lesser extend lysophosphatidylcholine (LPC) and lysophosphatidylserine (LPS). Prefers oleoyl-CoA as the acyl donor. May be involved in chondrocyte differentiation. The protein is Membrane-bound glycerophospholipid O-acyltransferase 2 of Rattus norvegicus (Rat).